The following is a 708-amino-acid chain: MEANHQRNDLGLVALTMLAQYHNISLNPEEIKHKFDLDGKGLSLTSWLLAAKSLALKAKHIKKEISRLHLVNLPALVWQDNGKHFLLVKVDTDNNRYLTYNLEQDAPQILSQDEFEACYQGQLILVTSRASVVGQLAKFDFTWFIPAVIKYRKIFLETLIVSIFLQIFALITPLFFQVVMDKVLVHRGFSTLNIITVALAIVIIFEIVLSGLRTYVFSHSTSRIDVELGAKLFRHLLSLPISYFENRRVGDTVARVRELDQIRNFLTGQALTSVLDLLFSFIFFAVMWYYSPKLTLVILGSLPCYILWSIFISPILRRRLDEKFARSADNQAFLVESVTAINMIKAMAVAPQMTDTWDKQLASYVSSSFRVTVLATIGQQGVQLIQKTVMVINLWLGAHLVISGDLSIGQLIAFNMLSGQVIAPVIRLAQLWQDFQQVGISVTRLGDVLNSPTEQYQGKLSLPEIKGDISFKNIRFRYKPDAPTILNNVNLEIRQGEVIGIVGRSGSGKSTLTKLLQRFYIPENGQVLIDGHDLALADPNWLRRQIGVVLQDNVLLNRSIRENIALSDPGMPMERVIYAAKLAGAHDFISELREGYNTIVGEQGAGLSGGQRQRIAIARALVNNPKILIFDEATSALDYESEHIIMQNMQKICQGRTVILIAHRLSTVKNADRIIVMEKGEIVEQGKHHELLQNSNGLYSYLHQLQLN.

The Peptidase C39 domain occupies 1–126; it reads MEANHQRNDL…ACYQGQLILV (126 aa). Positions 155–437 constitute an ABC transmembrane type-1 domain; the sequence is FLETLIVSIF…LAQLWQDFQQ (283 aa). 5 helical membrane-spanning segments follow: residues 159–179, 192–212, 270–290, 296–316, and 389–409; these read LIVS…FQVV, LNII…LSGL, ALTS…MWYY, LVIL…SPIL, and VMVI…LSIG. Positions 469–704 constitute an ABC transporter domain; that stretch reads ISFKNIRFRY…SNGLYSYLHQ (236 aa). Residue 503 to 510 coordinates ATP; that stretch reads GRSGSGKS.

The protein belongs to the ABC transporter superfamily. Protein-1 exporter (TC 3.A.1.109) family. Homodimer.

Its subcellular location is the cell inner membrane. The enzyme catalyses ATP + H2O + proteinSide 1 = ADP + phosphate + proteinSide 2.. Part of the ABC transporter complex LktBD involved in leukotoxin export. Transmembrane domains (TMD) form a pore in the inner membrane and the ATP-binding domain (NBD) is responsible for energy generation. This chain is Leukotoxin translocation ATP-binding protein LktB (lktB), found in Mannheimia haemolytica (Pasteurella haemolytica).